We begin with the raw amino-acid sequence, 38 residues long: Large ribosomal subunit protein bL36 (38 aa).

It belongs to the bacterial ribosomal protein bL36 family.

The sequence is that of Large ribosomal subunit protein bL36 from Mycoplasma mobile (strain ATCC 43663 / 163K / NCTC 11711) (Mesomycoplasma mobile).